Consider the following 448-residue polypeptide: B box and SPRY domain-containing protein (448 aa).

A compositionally biased stretch (low complexity) spans 1–18 (MSSDVSGTESGSESGPES). The segment at 1–58 (MSSDVSGTESGSESGPESVPEPVPEPGPEPESEPGPGPAPGPGPGPAPGPGPGLGREP) is disordered. Positions 19-51 (VPEPVPEPGPEPESEPGPGPAPGPGPGPAPGPG) are enriched in pro residues. A B box-type zinc finger spans residues 63 to 111 (QPCQLCPEHGKPLSWFCLSERRPVCATCAGFGGRCHRHRIRRAEEHAEE). The B30.2/SPRY domain maps to 257–448 (SPLLTQLWAT…VADQVISIVC (192 aa)).

In terms of assembly, interacts with TRPV5 and TRPV6. Interacts with YWHAZ/14-3-3 protein zeta. As to expression, predominantly expressed in testis. Expressed in brain at low levels.

It is found in the cytoplasm. It localises to the membrane. In terms of biological role, may regulate epithelial calcium transport by inhibiting TRPV5 activity. This is B box and SPRY domain-containing protein (Bspry) from Rattus norvegicus (Rat).